A 186-amino-acid polypeptide reads, in one-letter code: MKLIVGLGNPGDEYDKTRHNLGFMVIDKIAEKLNVKLDKEKFNGIFYKGENYIISKPLTYMNNSGNFVYDIKNFFDIEIDNIIIIYDEIDLKVGQASIKIKGSANGQRGMQSIIEKLKTENIKRIKIGVSRPLYEPVSSYILKKIPENEKETFEKVIDELADKLLTYIFNDFKTFINVSKLKNSKK.

Residue Tyr-14 participates in tRNA binding. His-19 acts as the Proton acceptor in catalysis. TRNA-binding residues include Tyr-60 and Asn-62.

Belongs to the PTH family. As to quaternary structure, monomer.

It localises to the cytoplasm. It catalyses the reaction an N-acyl-L-alpha-aminoacyl-tRNA + H2O = an N-acyl-L-amino acid + a tRNA + H(+). Its function is as follows. Hydrolyzes ribosome-free peptidyl-tRNAs (with 1 or more amino acids incorporated), which drop off the ribosome during protein synthesis, or as a result of ribosome stalling. In terms of biological role, catalyzes the release of premature peptidyl moieties from peptidyl-tRNA molecules trapped in stalled 50S ribosomal subunits, and thus maintains levels of free tRNAs and 50S ribosomes. The protein is Peptidyl-tRNA hydrolase of Mycoplasmopsis pulmonis (strain UAB CTIP) (Mycoplasma pulmonis).